The chain runs to 365 residues: Sulfate/thiosulfate import ATP-binding protein CysA (365 aa).

Residues 3 to 237 (IEIANIKKSF…PATRFVLEFM (235 aa)) form the ABC transporter domain. 35-42 (GPSGSGKT) contributes to the ATP binding site.

This sequence belongs to the ABC transporter superfamily. Sulfate/tungstate importer (TC 3.A.1.6) family. As to quaternary structure, the complex is composed of two ATP-binding proteins (CysA), two transmembrane proteins (CysT and CysW) and a solute-binding protein (CysP).

It localises to the cell inner membrane. It catalyses the reaction sulfate(out) + ATP + H2O = sulfate(in) + ADP + phosphate + H(+). The enzyme catalyses thiosulfate(out) + ATP + H2O = thiosulfate(in) + ADP + phosphate + H(+). Part of the ABC transporter complex CysAWTP involved in sulfate/thiosulfate import. Responsible for energy coupling to the transport system. This Escherichia coli (strain K12) protein is Sulfate/thiosulfate import ATP-binding protein CysA.